Reading from the N-terminus, the 919-residue chain is Transcriptional regulatory protein EDS1 (919 aa).

The tract at residues 1-54 is disordered; it reads MSHHVPNLYGTPIRDPHERKRNSASMGEVNQSVSSRNCERGSEKGTKQRKKASR. A compositionally biased stretch (polar residues) spans 23–36; that stretch reads SASMGEVNQSVSSR. Residues 37 to 46 are compositionally biased toward basic and acidic residues; that stretch reads NCERGSEKGT. The segment at residues 56–85 is a DNA-binding region (zn(2)-C6 fungal-type); that stretch reads CDQCRRKRIKCRFDKHTGVCQGCLEVGEKC. A disordered region spans residues 297-338; sequence AGCPNKKLGTDGRSDKWDKNSTWKPVYRSSNPSHPSTEKNVS. Positions 304–317 are enriched in basic and acidic residues; that stretch reads LGTDGRSDKWDKNS. Residues 318-338 show a composition bias toward polar residues; the sequence is TWKPVYRSSNPSHPSTEKNVS.

Binds DNA in a sequence-specific manner.

It localises to the nucleus. The chain is Transcriptional regulatory protein EDS1 (EDS1) from Saccharomyces cerevisiae (strain RM11-1a) (Baker's yeast).